The primary structure comprises 214 residues: Ornithine decarboxylase antizyme 1 (214 aa).

This sequence belongs to the ODC antizyme family. As to quaternary structure, interacts with ODC1 and thereby sterically blocks ODC homodimerization.

Functionally, ornithine decarboxylase (ODC) antizyme protein that negatively regulates ODC activity and intracellular polyamine biosynthesis and uptake in response to increased intracellular polyamine levels. Binds to ODC monomers, inhibiting the assembly of the functional ODC homodimer, and targets the monomers for ubiquitin-independent proteolytic destruction by the 26S proteasome. The chain is Ornithine decarboxylase antizyme 1 (oaz1a) from Danio rerio (Zebrafish).